The primary structure comprises 285 residues: Glutamate racemase (285 aa).

Substrate contacts are provided by residues 28-29 and 60-61; these read DS and YG. Cys92 acts as the Proton donor/acceptor in catalysis. 93-94 provides a ligand contact to substrate; it reads NT. Cys204 (proton donor/acceptor) is an active-site residue. A substrate-binding site is contributed by 205-206; that stretch reads TH.

This sequence belongs to the aspartate/glutamate racemases family.

It catalyses the reaction L-glutamate = D-glutamate. The protein operates within cell wall biogenesis; peptidoglycan biosynthesis. Functionally, provides the (R)-glutamate required for cell wall biosynthesis. The sequence is that of Glutamate racemase from Escherichia coli O6:H1 (strain CFT073 / ATCC 700928 / UPEC).